A 210-amino-acid chain; its full sequence is Large ribosomal subunit protein mL57 (210 aa).

The N-terminal 59 residues, 1-59, are a transit peptide targeting the mitochondrion; sequence MLTRHCNRLGLQIENKFVFRSSSWNCVRRIGKIACNENKYRYEMTSTEEDIDSFFSRVF.

It belongs to the ribonuclease III family. Mitochondrion-specific ribosomal protein mL57 subfamily. Component of the mitochondrial large ribosomal subunit (mt-LSU). Mature yeast 74S mitochondrial ribosomes consist of a small (37S) and a large (54S) subunit. The 37S small subunit contains a 15S ribosomal RNA (15S mt-rRNA) and at least 32 different proteins. The 54S large subunit contains a 21S rRNA (21S mt-rRNA) and at least 45 different proteins. mL57 forms a heterodimer with mL44 and stabilizes rRNA expansion segments 1/2 at a membrane-facing protuberance close to the point of attachment of the ribosome to the translocon in the membrane.

It localises to the mitochondrion. Component of the mitochondrial ribosome (mitoribosome), a dedicated translation machinery responsible for the synthesis of mitochondrial genome-encoded proteins, including at least some of the essential transmembrane subunits of the mitochondrial respiratory chain. The mitoribosomes are attached to the mitochondrial inner membrane and translation products are cotranslationally integrated into the membrane. The chain is Large ribosomal subunit protein mL57 (mrp15) from Schizosaccharomyces pombe (strain 972 / ATCC 24843) (Fission yeast).